A 736-amino-acid chain; its full sequence is Prolyl 3-hydroxylase 3 (736 aa).

The first 20 residues, 1–20 (MLRLLRPLLLLLLLPPPGSP), serve as a signal peptide directing secretion. TPR repeat units follow at residues 37 to 70 (PDLL…QAAL), 154 to 187 (REPY…NPMH), and 216 to 249 (HWAA…SLAQ). Positions 253–275 (CRADCEGPEEQQGAEEEEDGAAS) are disordered. Acidic residues predominate over residues 258 to 272 (EGPEEQQGAEEEEDG). One copy of the TPR 4 repeat lies at 316-349 (PNQLRRLHEAHAQVGNLSQAIENVLSVLLFYPED). 2 N-linked (GlcNAc...) asparagine glycosylation sites follow: Asn-331 and Asn-462. In terms of domain architecture, Fe2OG dioxygenase spans 561-675 (THLVCRSAIE…RCALALWHTW (115 aa)). Fe cation-binding residues include His-584, Asp-586, and His-656. The active site involves Arg-666. Residues 681-709 (EQEWIEAKELLQESQEEEEEEEEEMPSKD) adopt a coiled-coil conformation. Residues 689 to 736 (ELLQESQEEEEEEEEEMPSKDPSPEPPSRRHQRVQDKTGRAPRVREEL) are disordered. Residues 694–704 (SQEEEEEEEEE) show a composition bias toward acidic residues. The span at 721-736 (RVQDKTGRAPRVREEL) shows a compositional bias: basic and acidic residues. The Prevents secretion from ER signature appears at 733–736 (REEL).

This sequence belongs to the leprecan family. In terms of assembly, identified in a complex with PLOD1 and P3H4. It depends on Fe cation as a cofactor. L-ascorbate serves as cofactor. Detected in fetal cartilage (at protein level). Weak expression in heart, lung, ovary and skeletal muscle.

It localises to the endoplasmic reticulum. It carries out the reaction L-prolyl-[collagen] + 2-oxoglutarate + O2 = trans-3-hydroxy-L-prolyl-[collagen] + succinate + CO2. Its function is as follows. Part of a complex composed of PLOD1, P3H3 and P3H4 that catalyzes hydroxylation of lysine residues in collagen alpha chains and is required for normal assembly and cross-linkling of collagen fibrils. Required for normal hydroxylation of lysine residues in type I collagen chains in skin, bone, tendon, aorta and cornea. Required for normal skin stability via its role in hydroxylation of lysine residues in collagen alpha chains and in collagen fibril assembly. Apparently not required for normal prolyl 3-hydroxylation on collagen chains, possibly because it functions redundantly with other prolyl 3-hydroxylases. This is Prolyl 3-hydroxylase 3 from Homo sapiens (Human).